The following is a 166-amino-acid chain: Endoribonuclease YbeY (166 aa).

Histidine 130, histidine 134, and histidine 140 together coordinate Zn(2+).

Belongs to the endoribonuclease YbeY family. Zn(2+) is required as a cofactor.

The protein resides in the cytoplasm. Its function is as follows. Single strand-specific metallo-endoribonuclease involved in late-stage 70S ribosome quality control and in maturation of the 3' terminus of the 16S rRNA. The polypeptide is Endoribonuclease YbeY (Streptococcus uberis (strain ATCC BAA-854 / 0140J)).